Reading from the N-terminus, the 94-residue chain is Large ribosomal subunit protein bL25 (94 aa).

Belongs to the bacterial ribosomal protein bL25 family. As to quaternary structure, part of the 50S ribosomal subunit; part of the 5S rRNA/L5/L18/L25 subcomplex. Contacts the 5S rRNA. Binds to the 5S rRNA independently of L5 and L18.

Its function is as follows. This is one of the proteins that binds to the 5S RNA in the ribosome where it forms part of the central protuberance. The chain is Large ribosomal subunit protein bL25 from Pectobacterium atrosepticum (strain SCRI 1043 / ATCC BAA-672) (Erwinia carotovora subsp. atroseptica).